The chain runs to 378 residues: MAGRLRVALVAGEASGDILGSGLMQALRARHPEIEFIGVGGPRMEAEGLSSYFPMERLSVMGLVEVLGRLPELLRRRKRLIRTLIDARPDVMIGIDAPDFTLGVEHRLRQAGLRTVHYVSPSVWAWRQKRVLKIREACDLMLALFPFEARFYEEHGVPVRFVGHPLANTIPLQADRVAARERLGLPLDGQVVALMPGSRGGEVGKLGELFLDTAQRLLGERPGLRFVLPCASAARREQIERMLQGREPLPLTLLDGASHEALAACDAVLIASGTATLEALLYKRPMVVAYRVAGLTYRILKRLVKSPYISLPNLLAGRLLVPELIQDAATPRALATTLSPLLDDGSQQVEFFDAIHRALRQDASAQAAEAVLQLVERR.

The protein belongs to the LpxB family.

It carries out the reaction a lipid X + a UDP-2-N,3-O-bis[(3R)-3-hydroxyacyl]-alpha-D-glucosamine = a lipid A disaccharide + UDP + H(+). Its pathway is bacterial outer membrane biogenesis; LPS lipid A biosynthesis. Functionally, condensation of UDP-2,3-diacylglucosamine and 2,3-diacylglucosamine-1-phosphate to form lipid A disaccharide, a precursor of lipid A, a phosphorylated glycolipid that anchors the lipopolysaccharide to the outer membrane of the cell. The protein is Lipid-A-disaccharide synthase of Pseudomonas paraeruginosa (strain DSM 24068 / PA7) (Pseudomonas aeruginosa (strain PA7)).